The sequence spans 306 residues: Agmatinase (306 aa).

6 residues coordinate Mn(2+): H126, D149, H151, D153, D230, and D232.

It belongs to the arginase family. Agmatinase subfamily. Requires Mn(2+) as cofactor.

It carries out the reaction agmatine + H2O = urea + putrescine. It participates in amine and polyamine biosynthesis; putrescine biosynthesis via agmatine pathway; putrescine from agmatine: step 1/1. In terms of biological role, catalyzes the formation of putrescine from agmatine. The protein is Agmatinase of Serratia proteamaculans (strain 568).